The chain runs to 376 residues: Chaperone protein DnaJ (376 aa).

Positions 5–70 (DYYEILGVSK…QKRAAYDQYG (66 aa)) constitute a J domain. The CR-type zinc finger occupies 131 to 209 (GVTKEIRIPT…CHGHGRVERS (79 aa)). Zn(2+) contacts are provided by Cys-144, Cys-147, Cys-161, Cys-164, Cys-183, Cys-186, Cys-197, and Cys-200. CXXCXGXG motif repeat units follow at residues 144 to 151 (CDVCHGSG), 161 to 168 (CPTCHGSG), 183 to 190 (CPHCQGRG), and 197 to 204 (CNKCHGHG).

Belongs to the DnaJ family. Homodimer. Zn(2+) serves as cofactor.

The protein localises to the cytoplasm. Participates actively in the response to hyperosmotic and heat shock by preventing the aggregation of stress-denatured proteins and by disaggregating proteins, also in an autonomous, DnaK-independent fashion. Unfolded proteins bind initially to DnaJ; upon interaction with the DnaJ-bound protein, DnaK hydrolyzes its bound ATP, resulting in the formation of a stable complex. GrpE releases ADP from DnaK; ATP binding to DnaK triggers the release of the substrate protein, thus completing the reaction cycle. Several rounds of ATP-dependent interactions between DnaJ, DnaK and GrpE are required for fully efficient folding. Also involved, together with DnaK and GrpE, in the DNA replication of plasmids through activation of initiation proteins. The protein is Chaperone protein DnaJ of Escherichia coli (strain K12 / MC4100 / BW2952).